A 330-amino-acid chain; its full sequence is Protein pelota homolog (330 aa).

This sequence belongs to the eukaryotic release factor 1 family. Pelota subfamily. As to quaternary structure, monomer. Requires a divalent metal cation as cofactor.

Its subcellular location is the cytoplasm. In terms of biological role, may function in recognizing stalled ribosomes, interact with stem-loop structures in stalled mRNA molecules, and effect endonucleolytic cleavage of the mRNA. May play a role in the release non-functional ribosomes and degradation of damaged mRNAs. Has endoribonuclease activity. This chain is Protein pelota homolog, found in Pyrobaculum islandicum (strain DSM 4184 / JCM 9189 / GEO3).